We begin with the raw amino-acid sequence, 86 residues long: MKQTMDKPKRSFRRHLTPIRRHLSPIGSGDRIDYKNMSLISRFISEQGKILSGRVNRLTSKQQRLMTNAIKRARILSLLPFLYNEN.

The protein belongs to the bacterial ribosomal protein bS18 family. In terms of assembly, part of the 30S ribosomal subunit.

Its subcellular location is the plastid. It is found in the chloroplast. The polypeptide is Small ribosomal subunit protein bS18c (Larix laricina (Tamarack)).